An 81-amino-acid polypeptide reads, in one-letter code: Adenoregulin-related peptide (81 aa).

The first 22 residues, 1–22 (MAFLKKSLLLVLFLGLVSLSIC), serve as a signal peptide directing secretion. The propeptide occupies 23-43 (EEEKRENEDEEEQEDDEQSEM). The tract at residues 24–46 (EEKRENEDEEEQEDDEQSEMKRG) is disordered. A compositionally biased stretch (acidic residues) spans 30–40 (EDEEEQEDDEQ). Residue isoleucine 78 is modified to Isoleucine amide. A propeptide spanning residues 79–81 (GEQ) is cleaved from the precursor.

As to expression, expressed by the skin glands.

It is found in the secreted. Has antibacterial activity against Gram-positive bacterium M.luteus NCT C2665 and against Gram-negative bacterium E.coli K12D31. The chain is Adenoregulin-related peptide from Agalychnis callidryas (Red-eyed tree frog).